The sequence spans 146 residues: uncharacterized protein (146 aa).

The next 2 membrane-spanning stretches (helical) occupy residues 89-111 (AIEMVGKVLILVPLLASLVLLLY) and 121-143 (IGCGFCLGTVILAGIVLVGYSVV).

Its subcellular location is the cell membrane. This is an uncharacterized protein from Archaeoglobus fulgidus (strain ATCC 49558 / DSM 4304 / JCM 9628 / NBRC 100126 / VC-16).